A 301-amino-acid chain; its full sequence is GTPase IMAP family member 3 (301 aa).

At 1–279 (METLQNVVTG…GKKLEVLHSD (279 aa)) the chain is on the cytoplasmic side. Residues 20-223 (SRPLRILLVG…HSNDLFLHAE (204 aa)) form the AIG1-type G domain. Residues 29 to 37 (GKSGCGKSA), serine 50, 147 to 149 (RKE), and asparagine 184 each bind GTP. The interval 263–301 (VLKVLPIGKKLEVLHSDFCWYLVLAILIFFVFFFLLFYV) is required for targeting to the endoplasmic reticulum. Residues 280 to 300 (FCWYLVLAILIFFVFFFLLFY) form a helical; Anchor for type IV membrane protein membrane-spanning segment. A topological domain (lumenal) is located at residue valine 301.

Belongs to the TRAFAC class TrmE-Era-EngA-EngB-Septin-like GTPase superfamily. AIG1/Toc34/Toc159-like paraseptin GTPase family. IAN subfamily. In terms of assembly, interacts with BAD, BAK1, BAX, BCL2, BCL2L1/Bcl-xL and BCL2L11/BimEL. The interaction with BAX is increased, when cells initiate apoptosis upon IL2 withdrawal. In terms of tissue distribution, expressed in thymus (in thymocytes), spleen (in splenocytes), lymph node and, at lower levels, in lung. Highly expressed in T lymphocytes.

It localises to the endoplasmic reticulum membrane. Its function is as follows. During thymocyte development, may support the positive selection of CD4 and CD8 T cells. May play a role in mitochondrial DNA segregation in hematopoietic tissues. Binds GTP. This Mus musculus (Mouse) protein is GTPase IMAP family member 3 (Gimap3).